Consider the following 83-residue polypeptide: MRLFLSLPVLVVVLSMVLEGPAPVQGAPDVSSALDKLKEFGNTLEDKAWEVINRIKQSEFPAKTRDWFSETFRKVKEKLKINS.

The N-terminal stretch at 1–26 (MRLFLSLPVLVVVLSMVLEGPAPVQG) is a signal peptide.

The protein belongs to the apolipoprotein C1 family.

Its subcellular location is the secreted. Functionally, inhibitor of lipoprotein binding to the low density lipoprotein (LDL) receptor, LDL receptor-related protein, and very low density lipoprotein (VLDL) receptor. Associates with high density lipoproteins (HDL) and the triacylglycerol-rich lipoproteins in the plasma and makes up about 10% of the protein of the VLDL and 2% of that of HDL. Appears to interfere directly with fatty acid uptake and is also the major plasma inhibitor of cholesteryl ester transfer protein (CETP). Binds free fatty acids and reduces their intracellular esterification. Modulates the interaction of APOE with beta-migrating VLDL and inhibits binding of beta-VLDL to the LDL receptor-related protein. In Papio anubis (Olive baboon), this protein is Apolipoprotein C-I, basic form (APOC1).